The sequence spans 202 residues: Energy-coupling factor transporter transmembrane protein BioN (202 aa).

3 consecutive transmembrane segments (helical) span residues 21–40 (LLSL…LLLL), 44–63 (VLVA…EALL), and 68–90 (IFLT…AALV).

This sequence belongs to the CbiQ family. In terms of assembly, part of a biotin transporter complex composed of BioM, BioN and BioY.

It localises to the cell inner membrane. In terms of biological role, involved in biotin uptake. The polypeptide is Energy-coupling factor transporter transmembrane protein BioN (bioN) (Rhizobium etli (strain ATCC 51251 / DSM 11541 / JCM 21823 / NBRC 15573 / CFN 42)).